A 252-amino-acid polypeptide reads, in one-letter code: ATP synthase subunit a (252 aa).

6 helical membrane-spanning segments follow: residues 29–49 (FTNV…FLFI), 87–107 (FFPL…IGLF), 116–136 (QIMI…GYGF), 146–166 (LFVP…IEVI), 183–205 (MLAG…ELGI), and 219–239 (VAIT…FTVL).

It belongs to the ATPase A chain family. F-type ATPases have 2 components, CF(1) - the catalytic core - and CF(0) - the membrane proton channel. CF(1) has five subunits: alpha(3), beta(3), gamma(1), delta(1), epsilon(1). CF(0) has three main subunits: a(1), b(2) and c(9-12). The alpha and beta chains form an alternating ring which encloses part of the gamma chain. CF(1) is attached to CF(0) by a central stalk formed by the gamma and epsilon chains, while a peripheral stalk is formed by the delta and b chains.

The protein resides in the cell inner membrane. Functionally, key component of the proton channel; it plays a direct role in the translocation of protons across the membrane. In Bartonella quintana (strain Toulouse) (Rochalimaea quintana), this protein is ATP synthase subunit a.